The sequence spans 379 residues: Chaperone protein DnaJ (379 aa).

Residues 5 to 70 enclose the J domain; sequence DYYEILGVSK…QKRAAYDQYG (66 aa). The segment at 134 to 212 adopts a CR-type zinc-finger fold; sequence GVTKEIRIPT…CHGHGRVEKS (79 aa). Residues Cys-147, Cys-150, Cys-164, Cys-167, Cys-186, Cys-189, Cys-200, and Cys-203 each coordinate Zn(2+). CXXCXGXG motif repeat units lie at residues 147-154, 164-171, 186-193, and 200-207; these read CDVCHGSG, CPTCHGSG, CPHCQGRG, and CHKCHGHG.

It belongs to the DnaJ family. Homodimer. It depends on Zn(2+) as a cofactor.

It localises to the cytoplasm. In terms of biological role, participates actively in the response to hyperosmotic and heat shock by preventing the aggregation of stress-denatured proteins and by disaggregating proteins, also in an autonomous, DnaK-independent fashion. Unfolded proteins bind initially to DnaJ; upon interaction with the DnaJ-bound protein, DnaK hydrolyzes its bound ATP, resulting in the formation of a stable complex. GrpE releases ADP from DnaK; ATP binding to DnaK triggers the release of the substrate protein, thus completing the reaction cycle. Several rounds of ATP-dependent interactions between DnaJ, DnaK and GrpE are required for fully efficient folding. Also involved, together with DnaK and GrpE, in the DNA replication of plasmids through activation of initiation proteins. The protein is Chaperone protein DnaJ of Salmonella agona (strain SL483).